We begin with the raw amino-acid sequence, 189 residues long: Protein GrpE (189 aa).

Basic and acidic residues predominate over residues 1-38 (MTKSNETERMEESEETHSSDIRSASESDHASGSDHTES). The tract at residues 1 to 54 (MTKSNETERMEESEETHSSDIRSASESDHASGSDHTESADEIPTADAEQGELEQ) is disordered.

It belongs to the GrpE family. As to quaternary structure, homodimer.

It localises to the cytoplasm. Functionally, participates actively in the response to hyperosmotic and heat shock by preventing the aggregation of stress-denatured proteins, in association with DnaK and GrpE. It is the nucleotide exchange factor for DnaK and may function as a thermosensor. Unfolded proteins bind initially to DnaJ; upon interaction with the DnaJ-bound protein, DnaK hydrolyzes its bound ATP, resulting in the formation of a stable complex. GrpE releases ADP from DnaK; ATP binding to DnaK triggers the release of the substrate protein, thus completing the reaction cycle. Several rounds of ATP-dependent interactions between DnaJ, DnaK and GrpE are required for fully efficient folding. This is Protein GrpE from Tropheryma whipplei (strain Twist) (Whipple's bacillus).